A 491-amino-acid chain; its full sequence is Phosphatidylglycerol--prolipoprotein diacylglyceryl transferase (491 aa).

Helical transmembrane passes span 24-44 (IPLR…IWWG), 58-78 (VLDV…AYHV), and 98-118 (IWQG…GAWI). R146 is an a 1,2-diacyl-sn-glycero-3-phospho-(1'-sn-glycerol) binding site. 2 consecutive transmembrane segments (helical) span residues 192-212 (IVHP…IALV) and 256-276 (INNF…VFAT). Residues 309–323 (NGPAEPGATASTATD) are compositionally biased toward low complexity. Residues 309-491 (NGPAEPGATA…DRVDSGENDA (183 aa)) are disordered. Over residues 347-360 (KGDRGTADAADTAK) the composition is skewed to basic and acidic residues. Composition is skewed to low complexity over residues 361–387 (DASA…GSSD), 394–406 (AVKA…AAEK), and 415–438 (AGEA…SAKS). A compositionally biased stretch (basic and acidic residues) spans 453–462 (NESESTRDNE). The span at 463-481 (STSAGTAASATGSAGAGAT) shows a compositional bias: low complexity. Over residues 482–491 (DRVDSGENDA) the composition is skewed to basic and acidic residues.

The protein belongs to the Lgt family.

The protein resides in the cell membrane. It catalyses the reaction L-cysteinyl-[prolipoprotein] + a 1,2-diacyl-sn-glycero-3-phospho-(1'-sn-glycerol) = an S-1,2-diacyl-sn-glyceryl-L-cysteinyl-[prolipoprotein] + sn-glycerol 1-phosphate + H(+). Its pathway is protein modification; lipoprotein biosynthesis (diacylglyceryl transfer). Functionally, catalyzes the transfer of the diacylglyceryl group from phosphatidylglycerol to the sulfhydryl group of the N-terminal cysteine of a prolipoprotein, the first step in the formation of mature lipoproteins. The sequence is that of Phosphatidylglycerol--prolipoprotein diacylglyceryl transferase from Nocardia farcinica (strain IFM 10152).